We begin with the raw amino-acid sequence, 312 residues long: Homeobox-leucine zipper protein ATHB-5 (312 aa).

Positions 1-33 (MKRSRGSSDSLSGFLPIRHSTTDKQISPRPTTT) are disordered. Residues 23 to 33 (DKQISPRPTTT) are compositionally biased toward polar residues. The homeobox DNA-binding region spans 69-128 (AAEKKRRLGVEQVKALEKNFEIDNKLEPERKVKLAQELGLQPRQVAIWFQNRRARWKTKQ). Positions 129–164 (LERDYGVLKSNFDALKRNRDSLQRDNDSLLGQIKEL) are leucine-zipper.

It belongs to the HD-ZIP homeobox family. Class I subfamily. Interacts with DNA as homodimer. In terms of tissue distribution, widely expressed.

The protein localises to the nucleus. Probable transcription factor that acts as a positive regulator of ABA-responsiveness, mediating the inhibitory effect of ABA on growth during seedling establishment. Binds to the DNA sequence 5'-CAATNATTG-3'. The polypeptide is Homeobox-leucine zipper protein ATHB-5 (ATHB-5) (Arabidopsis thaliana (Mouse-ear cress)).